The primary structure comprises 152 residues: Nucleoside diphosphate kinase B (152 aa).

Residues 1 to 66 (MAHAERTFIA…DRPFFPGLVK (66 aa)) form an interaction with AKAP13 region. Residues Lys12, Phe60, Arg88, Thr94, Arg105, and Asn115 each contribute to the ATP site. The Pros-phosphohistidine intermediate role is filled by His118.

This sequence belongs to the NDK family. In terms of assembly, hexamer of two different chains: An and B (A6, A5B, A4B2, A3B3, A2B4, AB5, B6). Interacts with CAPN8. Interacts with AKAP13. Interacts with ITGB1BP1 (via C-terminal domain region). Interacts with BCL2L10. It depends on Mg(2+) as a cofactor.

The protein resides in the cytoplasm. The protein localises to the cell projection. Its subcellular location is the lamellipodium. It localises to the ruffle. It is found in the nucleus. The enzyme catalyses a 2'-deoxyribonucleoside 5'-diphosphate + ATP = a 2'-deoxyribonucleoside 5'-triphosphate + ADP. The catalysed reaction is a ribonucleoside 5'-diphosphate + ATP = a ribonucleoside 5'-triphosphate + ADP. It catalyses the reaction ATP + protein L-histidine = ADP + protein N-phospho-L-histidine.. In terms of biological role, major role in the synthesis of nucleoside triphosphates other than ATP. The ATP gamma phosphate is transferred to the NDP beta phosphate via a ping-pong mechanism, using a phosphorylated active-site intermediate. Negatively regulates Rho activity by interacting with AKAP13/LBC. Acts as a transcriptional activator of the MYC gene; binds DNA non-specifically. Binds to both single-stranded guanine- and cytosine-rich strands within the nuclease hypersensitive element (NHE) III(1) region of the MYC gene promoter. Does not bind to duplex NHE III(1). Has G-quadruplex (G4) DNA-binding activity, which is independent of its nucleotide-binding and kinase activity. Binds both folded and unfolded G4 with similar low nanomolar affinities. Stabilizes folded G4s regardless of whether they are prefolded or not. Exhibits histidine protein kinase activity. The protein is Nucleoside diphosphate kinase B (NME2) of Bos taurus (Bovine).